A 283-amino-acid polypeptide reads, in one-letter code: Energy-coupling factor transporter ATP-binding protein EcfA1 (283 aa).

In terms of domain architecture, ABC transporter spans 7 to 244; that stretch reads VEFRHVSFTY…PELLQEIGLD (238 aa). Residue 41–48 coordinates ATP; that stretch reads GHNGSGKS.

It belongs to the ABC transporter superfamily. Energy-coupling factor EcfA family. In terms of assembly, forms a stable energy-coupling factor (ECF) transporter complex composed of 2 membrane-embedded substrate-binding proteins (S component), 2 ATP-binding proteins (A component) and 2 transmembrane proteins (T component).

The protein localises to the cell membrane. Functionally, ATP-binding (A) component of a common energy-coupling factor (ECF) ABC-transporter complex. Unlike classic ABC transporters this ECF transporter provides the energy necessary to transport a number of different substrates. The protein is Energy-coupling factor transporter ATP-binding protein EcfA1 of Lactobacillus acidophilus (strain ATCC 700396 / NCK56 / N2 / NCFM).